Consider the following 461-residue polypeptide: Aspartyl/glutamyl-tRNA(Asn/Gln) amidotransferase subunit B (461 aa).

Belongs to the GatB/GatE family. GatB subfamily. Heterotrimer of A, B and C subunits.

The catalysed reaction is L-glutamyl-tRNA(Gln) + L-glutamine + ATP + H2O = L-glutaminyl-tRNA(Gln) + L-glutamate + ADP + phosphate + H(+). It carries out the reaction L-aspartyl-tRNA(Asn) + L-glutamine + ATP + H2O = L-asparaginyl-tRNA(Asn) + L-glutamate + ADP + phosphate + 2 H(+). Functionally, allows the formation of correctly charged Asn-tRNA(Asn) or Gln-tRNA(Gln) through the transamidation of misacylated Asp-tRNA(Asn) or Glu-tRNA(Gln) in organisms which lack either or both of asparaginyl-tRNA or glutaminyl-tRNA synthetases. The reaction takes place in the presence of glutamine and ATP through an activated phospho-Asp-tRNA(Asn) or phospho-Glu-tRNA(Gln). The sequence is that of Aspartyl/glutamyl-tRNA(Asn/Gln) amidotransferase subunit B from Methanopyrus kandleri (strain AV19 / DSM 6324 / JCM 9639 / NBRC 100938).